The chain runs to 490 residues: MANYFNTLPLREQLAQLAKCRFMDSSEFADGVEALKGKKMVVIGCGAQGLNQGLNLRDSGLDVSYALRPEAIAQKRQSWKNATENGFVVGTYEELIPTADVVLNLTPDKQHTPVVKAVMPLMKEGACLSYSHGFNIVEEGMQIREDLTVIMVAPKCPGSEVRAEYVRGFGVPTLIAVHEDNDPKGEGLALAKAYAVGTGGHKAGVLMSSFIAEVKSDLMGEQTILCGMLQTGSILCFDKMVEEGIDAGYASRLIQYGWETITEALKYGGVTNMLDRLSNPAKIKAFDLSEELKVIMRPLYNKHQDDIISGHFSQTMMEDWANDDKNLLQWRADTAETNFEKTPAGDVEISEQEFFDNGILMVAMVKAGVELAFETMTAAGIIAESAYYESLHETPLIANTIARKKLYEMNATISDTAEYGCYLYNHACVPLLADFMKDIKTDVIGKGLSVEDNGVDNARLIEVNKALRSHPVEAVGAVLRGHMADMKKIV.

Residues 18-208 (AKCRFMDSSE…GGHKAGVLMS (191 aa)) enclose the KARI N-terminal Rossmann domain. NADP(+)-binding positions include 45-48 (CGAQ), R68, R76, S78, and 108-110 (DKQ). Residue H132 is part of the active site. An NADP(+)-binding site is contributed by G158. KARI C-terminal knotted domains lie at 209–344 (SFIA…KTPA) and 345–486 (GDVE…MADM). Residues D217, E221, E389, and E393 each coordinate Mg(2+). S414 lines the substrate pocket.

Belongs to the ketol-acid reductoisomerase family. The cofactor is Mg(2+).

The catalysed reaction is (2R)-2,3-dihydroxy-3-methylbutanoate + NADP(+) = (2S)-2-acetolactate + NADPH + H(+). It carries out the reaction (2R,3R)-2,3-dihydroxy-3-methylpentanoate + NADP(+) = (S)-2-ethyl-2-hydroxy-3-oxobutanoate + NADPH + H(+). It functions in the pathway amino-acid biosynthesis; L-isoleucine biosynthesis; L-isoleucine from 2-oxobutanoate: step 2/4. The protein operates within amino-acid biosynthesis; L-valine biosynthesis; L-valine from pyruvate: step 2/4. Functionally, involved in the biosynthesis of branched-chain amino acids (BCAA). Catalyzes an alkyl-migration followed by a ketol-acid reduction of (S)-2-acetolactate (S2AL) to yield (R)-2,3-dihydroxy-isovalerate. In the isomerase reaction, S2AL is rearranged via a Mg-dependent methyl migration to produce 3-hydroxy-3-methyl-2-ketobutyrate (HMKB). In the reductase reaction, this 2-ketoacid undergoes a metal-dependent reduction by NADPH to yield (R)-2,3-dihydroxy-isovalerate. In Marinomonas sp. (strain MWYL1), this protein is Ketol-acid reductoisomerase (NADP(+)).